A 712-amino-acid chain; its full sequence is Polyribonucleotide nucleotidyltransferase (712 aa).

Positions 487 and 493 each coordinate Mg(2+). Positions proline 554–isoleucine 613 constitute a KH domain. The 69-residue stretch at glycine 623–lysine 691 folds into the S1 motif domain.

It belongs to the polyribonucleotide nucleotidyltransferase family. The cofactor is Mg(2+).

The protein localises to the cytoplasm. It carries out the reaction RNA(n+1) + phosphate = RNA(n) + a ribonucleoside 5'-diphosphate. Functionally, involved in mRNA degradation. Catalyzes the phosphorolysis of single-stranded polyribonucleotides processively in the 3'- to 5'-direction. This chain is Polyribonucleotide nucleotidyltransferase, found in Bacillus cereus (strain AH820).